The following is a 412-amino-acid chain: Peptidase T (412 aa).

His-79 is a Zn(2+) binding site. The active site involves Asp-81. Asp-142 serves as a coordination point for Zn(2+). Glu-176 serves as the catalytic Proton acceptor. Zn(2+) contacts are provided by Glu-177, Asp-199, and His-381.

Belongs to the peptidase M20B family. Zn(2+) is required as a cofactor.

The protein resides in the cytoplasm. The enzyme catalyses Release of the N-terminal residue from a tripeptide.. Its function is as follows. Cleaves the N-terminal amino acid of tripeptides. This chain is Peptidase T, found in Exiguobacterium sp. (strain ATCC BAA-1283 / AT1b).